Reading from the N-terminus, the 302-residue chain is Probable WRKY transcription factor 40 (302 aa).

The segment at residues 140–206 (DTTLVVKDGY…YEGEHNHPMP (67 aa)) is a DNA-binding region (WRKY).

It belongs to the WRKY group III family.

It is found in the nucleus. Functionally, transcription factor. Interacts specifically with the W box (5'-(T)TGAC[CT]-3'), a frequently occurring elicitor-responsive cis-acting element. In Arabidopsis thaliana (Mouse-ear cress), this protein is Probable WRKY transcription factor 40.